A 363-amino-acid polypeptide reads, in one-letter code: NAD(P)H-quinone oxidoreductase subunit 1, chloroplastic (363 aa).

The next 6 helical transmembrane spans lie at 30 to 50, 98 to 118, 127 to 147, 248 to 268, 300 to 320, and 336 to 356; these read LVPI…IVWL, FSIG…VIPF, LSIG…GLLM, YSGI…LVSS, VFGT…FLFI, and LLNL…LLTT.

The protein belongs to the complex I subunit 1 family. As to quaternary structure, NDH is composed of at least 16 different subunits, 5 of which are encoded in the nucleus.

The protein resides in the plastid. The protein localises to the chloroplast thylakoid membrane. The enzyme catalyses a plastoquinone + NADH + (n+1) H(+)(in) = a plastoquinol + NAD(+) + n H(+)(out). The catalysed reaction is a plastoquinone + NADPH + (n+1) H(+)(in) = a plastoquinol + NADP(+) + n H(+)(out). NDH shuttles electrons from NAD(P)H:plastoquinone, via FMN and iron-sulfur (Fe-S) centers, to quinones in the photosynthetic chain and possibly in a chloroplast respiratory chain. The immediate electron acceptor for the enzyme in this species is believed to be plastoquinone. Couples the redox reaction to proton translocation, and thus conserves the redox energy in a proton gradient. The protein is NAD(P)H-quinone oxidoreductase subunit 1, chloroplastic of Drimys granadensis.